The following is a 295-amino-acid chain: Pyridoxal 5'-phosphate synthase subunit PdxS (295 aa).

D25 provides a ligand contact to D-ribose 5-phosphate. The Schiff-base intermediate with D-ribose 5-phosphate role is filled by K82. Position 154 (G154) interacts with D-ribose 5-phosphate. D-glyceraldehyde 3-phosphate is bound at residue R166. D-ribose 5-phosphate contacts are provided by residues G215 and 236 to 237; that span reads GS.

This sequence belongs to the PdxS/SNZ family. In the presence of PdxT, forms a dodecamer of heterodimers.

It carries out the reaction aldehydo-D-ribose 5-phosphate + D-glyceraldehyde 3-phosphate + L-glutamine = pyridoxal 5'-phosphate + L-glutamate + phosphate + 3 H2O + H(+). The protein operates within cofactor biosynthesis; pyridoxal 5'-phosphate biosynthesis. Catalyzes the formation of pyridoxal 5'-phosphate from ribose 5-phosphate (RBP), glyceraldehyde 3-phosphate (G3P) and ammonia. The ammonia is provided by the PdxT subunit. Can also use ribulose 5-phosphate and dihydroxyacetone phosphate as substrates, resulting from enzyme-catalyzed isomerization of RBP and G3P, respectively. The protein is Pyridoxal 5'-phosphate synthase subunit PdxS of Bacillus anthracis (strain A0248).